A 668-amino-acid chain; its full sequence is UvrABC system protein B (668 aa).

Residues 36-276 (DNIKGGEKAQ…EEAIKNIMEE (241 aa)) form the Helicase ATP-binding domain. ATP is bound at residue 49 to 56 (GATGTGKT). The short motif at 102–125 (YYDYYQPEAYVPSSDTYIEKDSSV) is the Beta-hairpin element. One can recognise a Helicase C-terminal domain in the interval 440 to 606 (QMDDLLGEIN…TIKKEIRDLI (167 aa)). One can recognise a UVR domain in the interval 632 to 667 (QEAIKKLQKQMHEAAELLDFELAAQIRDMVLELKSM).

This sequence belongs to the UvrB family. As to quaternary structure, forms a heterotetramer with UvrA during the search for lesions. Interacts with UvrC in an incision complex.

It is found in the cytoplasm. In terms of biological role, the UvrABC repair system catalyzes the recognition and processing of DNA lesions. A damage recognition complex composed of 2 UvrA and 2 UvrB subunits scans DNA for abnormalities. Upon binding of the UvrA(2)B(2) complex to a putative damaged site, the DNA wraps around one UvrB monomer. DNA wrap is dependent on ATP binding by UvrB and probably causes local melting of the DNA helix, facilitating insertion of UvrB beta-hairpin between the DNA strands. Then UvrB probes one DNA strand for the presence of a lesion. If a lesion is found the UvrA subunits dissociate and the UvrB-DNA preincision complex is formed. This complex is subsequently bound by UvrC and the second UvrB is released. If no lesion is found, the DNA wraps around the other UvrB subunit that will check the other stand for damage. In Streptococcus thermophilus (strain ATCC BAA-491 / LMD-9), this protein is UvrABC system protein B.